Here is a 204-residue protein sequence, read N- to C-terminus: Ribonuclease HII (204 aa).

In terms of domain architecture, RNase H type-2 spans 17–204 (TLIAGVDEVG…KPVKKVLGLL (188 aa)). D23, E24, and D115 together coordinate a divalent metal cation.

Belongs to the RNase HII family. Requires Mn(2+) as cofactor. Mg(2+) is required as a cofactor.

The protein localises to the cytoplasm. It carries out the reaction Endonucleolytic cleavage to 5'-phosphomonoester.. In terms of biological role, endonuclease that specifically degrades the RNA of RNA-DNA hybrids. The chain is Ribonuclease HII from Psychromonas ingrahamii (strain DSM 17664 / CCUG 51855 / 37).